The primary structure comprises 264 residues: Phosphonates import ATP-binding protein PhnC (264 aa).

An ABC transporter domain is found at 7–254 (LSIRAASKTF…KLIDIYGPEF (248 aa)). ATP is bound at residue 39–46 (GPSGSGKS).

It belongs to the ABC transporter superfamily. Phosphonates importer (TC 3.A.1.9.1) family. As to quaternary structure, the complex is composed of two ATP-binding proteins (PhnC), two transmembrane proteins (PhnE) and a solute-binding protein (PhnD).

Its subcellular location is the cell inner membrane. The catalysed reaction is phosphonate(out) + ATP + H2O = phosphonate(in) + ADP + phosphate + H(+). In terms of biological role, part of the ABC transporter complex PhnCDE involved in phosphonates import. Responsible for energy coupling to the transport system. This Caulobacter vibrioides (strain ATCC 19089 / CIP 103742 / CB 15) (Caulobacter crescentus) protein is Phosphonates import ATP-binding protein PhnC.